The chain runs to 380 residues: Opsin-2 (380 aa).

Residues 1 to 51 are Extracellular-facing; sequence MVNTTDFYPVPAAMAYESSVGLPLLGWNVPTEHLDLVHPHWRSFQVPNKYW. The N-linked (GlcNAc...) asparagine glycan is linked to Asn-3. A helical membrane pass occupies residues 52–76; it reads HFGLAFVYFMLMCMSSLGNGIVLWI. Over 77–88 the chain is Cytoplasmic; the sequence is YATTKSIRTPSN. The chain crosses the membrane as a helical span at residues 89–115; it reads MFIVNLALFDVLMLLEMPMLVVSSLFY. Over 116 to 128 the chain is Extracellular; the sequence is QRPVGWELGCDIY. Cys-125 and Cys-202 form a disulfide bridge. Residues 129-148 traverse the membrane as a helical segment; the sequence is AALGSVAGIGSAINNAAIAF. Residues 149–166 lie on the Cytoplasmic side of the membrane; sequence DRYRTISCPIDGRLTQGQ. A helical transmembrane segment spans residues 167–191; that stretch reads VLALIAGTWVWTLPFTLMPLLRIWS. Residues 192–215 are Extracellular-facing; sequence RFTAEGFLTTCSFDYLTDDEDTKV. Residues 216–243 form a helical membrane-spanning segment; it reads FVGCIFAWSYAFPLCLICCFYYRLIGAV. Topologically, residues 244–279 are cytoplasmic; sequence REHEKMLRDQAKKMNVKSLQSNADTEAQSAEIRIAK. The helical transmembrane segment at 280–303 threads the bilayer; that stretch reads VALTIFFLFLCSWTPYAVVAMIGA. At 304 to 311 the chain is on the extracellular side; that stretch reads FGNRAALT. A helical membrane pass occupies residues 312-336; that stretch reads PLSTMIPAVTAKIVSCIDPWVYAIN. Residue Lys-323 is modified to N6-(retinylidene)lysine. Topologically, residues 337-380 are cytoplasmic; that stretch reads HPRFRAEVQKRMKWLHLGEDARSSKSDTSSTATDRTVGNVSASA. The segment at 358–380 is disordered; sequence RSSKSDTSSTATDRTVGNVSASA. Positions 362–372 are enriched in low complexity; it reads SDTSSTATDRT.

It belongs to the G-protein coupled receptor 1 family. Opsin subfamily. Phosphorylated on some or all of the serine and threonine residues present in the C-terminal region.

It localises to the membrane. Its function is as follows. Visual pigments are the light-absorbing molecules that mediate vision. They consist of an apoprotein, opsin, covalently linked to cis-retinal. This Schistocerca gregaria (Desert locust) protein is Opsin-2 (Lo2).